The following is a 64-amino-acid chain: Large ribosomal subunit protein bL35 (64 aa).

A compositionally biased stretch (basic residues) spans 38–53 (KRKANLNAPKHVHHTN). The interval 38 to 64 (KRKANLNAPKHVHHTNAHSVMSLLCRA) is disordered.

It belongs to the bacterial ribosomal protein bL35 family.

The protein is Large ribosomal subunit protein bL35 of Helicobacter pylori (strain G27).